An 899-amino-acid polypeptide reads, in one-letter code: MRDADGKDISGAGIRRRFLEFYEARDHARLPSSSLVPEDPTVLLTIAGMLQFKPVFMGQEERKVPTATTTQKCVRTNDIENVGVTARHHTFFEMLGNFSFGDYFKKEAIAWAWEISTKEYGLDASRIWISVFREDDEAYAIWRDEIGIPENRIKRMDEADNFWAAGPTGPCGPCSELYWDFHPERGVDGSEDLDDDSRFIEFYNLVFMESVRDTDGNMKPLKRKNIDTGMGLERMAQILQGKPNNYETDLIRPIIDAAASMAGISYDDADDATKLKLKVIGDHTRAVCYLISDGVLPSNVGRGYIVRRLLRRVVRCGRLLGVKAPDGAGAFTPAIARVAIGLSEACDANVLKSSQKICDELEREELRFATTLGRGEEILADMLAAAKTKDANAPKLTGEDAFTLYDTYGFPLDITTDVATEAGVDVDVDGFEKAMAAARDLSRDARVAVDVTVGDLLGAIADELGEPTRFTGYGSVTEEGVKVRALLKGGERVASAGAGDTVEVVLDATPFYAEGGGQVGDEGEIILSDDRGKLVVGDCRKAAGGRLFVHSCVVSEGVVGEGDAVTATVSAASRRRAKANHTATHLLQSALKMTIGEDVSQAGSLVNFERLRFDFNAPSAPTPEELARVESLVNGWIGDAIDLTAEEMAISRAKEKGATAMFGEKYGDVVRVVDVPGVSMELCGGTHVKNTAEIGGFKILSESGIAAGVRRIEAVSGPGVVDLLQERDGTVKALAGSLRVPPEEIAGRVSALMEDLKTSQKEAEALRGELAVAKATALASQAIDAPGGAKVLVARMDGVDPAALKAAAESLVAALGDDVAVVLGSGGDDGKVGLVASFTEGVQKAGGLKAGVVLGATAKACGGGGGGKPGFAQAGGRDASALDAALEDAKKTIVDALSK.

The Zn(2+) site is built by histidine 581, histidine 585, cysteine 683, and histidine 687.

Belongs to the class-II aminoacyl-tRNA synthetase family. As to quaternary structure, monomer. Zn(2+) serves as cofactor.

It is found in the plastid. Its subcellular location is the chloroplast. The protein resides in the mitochondrion. It carries out the reaction tRNA(Ala) + L-alanine + ATP = L-alanyl-tRNA(Ala) + AMP + diphosphate. In terms of biological role, catalyzes the attachment of alanine to tRNA(Ala) in a two-step reaction: alanine is first activated by ATP to form Ala-AMP and then transferred to the acceptor end of tRNA(Ala). Also edits incorrectly charged tRNA(Ala) via its editing domain. In Micromonas pusilla (strain CCMP1545) (Picoplanktonic green alga), this protein is Alanine--tRNA ligase, chloroplastic/mitochondrial.